The following is a 120-amino-acid chain: NAD(P)H-quinone oxidoreductase subunit 3 (120 aa).

A run of 3 helical transmembrane segments spans residues 6–26, 64–84, and 89–109; these read GYEY…LALT, MFAL…PWAV, and LGLL…VALA.

It belongs to the complex I subunit 3 family. As to quaternary structure, NDH-1 can be composed of about 15 different subunits; different subcomplexes with different compositions have been identified which probably have different functions.

It localises to the cellular thylakoid membrane. The catalysed reaction is a plastoquinone + NADH + (n+1) H(+)(in) = a plastoquinol + NAD(+) + n H(+)(out). It carries out the reaction a plastoquinone + NADPH + (n+1) H(+)(in) = a plastoquinol + NADP(+) + n H(+)(out). In terms of biological role, NDH-1 shuttles electrons from an unknown electron donor, via FMN and iron-sulfur (Fe-S) centers, to quinones in the respiratory and/or the photosynthetic chain. The immediate electron acceptor for the enzyme in this species is believed to be plastoquinone. Couples the redox reaction to proton translocation, and thus conserves the redox energy in a proton gradient. Cyanobacterial NDH-1 also plays a role in inorganic carbon-concentration. The protein is NAD(P)H-quinone oxidoreductase subunit 3 of Prochlorococcus marinus (strain NATL1A).